The primary structure comprises 244 residues: Large ribosomal subunit protein uL30 (244 aa).

This sequence belongs to the universal ribosomal protein uL30 family.

This is Large ribosomal subunit protein uL30 (RPL7) from Candida glabrata (strain ATCC 2001 / BCRC 20586 / JCM 3761 / NBRC 0622 / NRRL Y-65 / CBS 138) (Yeast).